A 179-amino-acid polypeptide reads, in one-letter code: Large ribosomal subunit protein uL5 (179 aa).

This sequence belongs to the universal ribosomal protein uL5 family. Part of the 50S ribosomal subunit; part of the 5S rRNA/L5/L18/L25 subcomplex. Contacts the 5S rRNA and the P site tRNA. Forms a bridge to the 30S subunit in the 70S ribosome.

This is one of the proteins that bind and probably mediate the attachment of the 5S RNA into the large ribosomal subunit, where it forms part of the central protuberance. In the 70S ribosome it contacts protein S13 of the 30S subunit (bridge B1b), connecting the 2 subunits; this bridge is implicated in subunit movement. Contacts the P site tRNA; the 5S rRNA and some of its associated proteins might help stabilize positioning of ribosome-bound tRNAs. This chain is Large ribosomal subunit protein uL5, found in Pseudomonas fluorescens (strain ATCC BAA-477 / NRRL B-23932 / Pf-5).